A 523-amino-acid polypeptide reads, in one-letter code: MLFSSSSSSLNSEVSQVFSENISSRSTTLTESSTQSEIRQHFGNEDFSGELPKKLIQLKKLKNGGTTIKKAKEDLEYCYDSLRLYENPYVTSSVDKKCGYSIELYLDNKYKTLMFSDLQLNADYPLYYDSSLDNISTNVERERATPLQIKGKIRINIDREDQALLITSHSISLKCFTKEYACFVNSETSKNSYSDKIIKELNHTEFFESSTYPKQQLRVIHHSLNDKKILLTKGTYDYPFTFTLQANTFPASFSSFFGKTHFRIESLTTIMRIPSKPKNLLKFLKNESFTDKIILTEEIKVKRVLPSTSMLKFETFQLRSYNTASEIVVSVIGNSKLIEIGMPFQMILSITKTDSSIELQEASLAVAQRMAIPSIDLKTKKILREPYIKKSEYLLRTVESQSFDSDKTIFGFCFDDVVIPTYADGLPSWFKTFYCEPSSFYPNHAALKVTHLLLFRITYSRNELVEGLEMKKNYRITVNFPILVGDSDISTSSLLPKYEKFENISDLQDEPPLYSMVAGENSL.

As to quaternary structure, interacts with SPO1 in meiosis.

Its function is as follows. Regulates expression of PIS1. The sequence is that of Sporulation protein 23 (SPO23) from Saccharomyces cerevisiae (strain ATCC 204508 / S288c) (Baker's yeast).